Reading from the N-terminus, the 307-residue chain is Putative F-box/LRR-repeat protein 22 (307 aa).

Over residues 1–15 the composition is skewed to polar residues; it reads MVTSSSSPPLATSQL. A disordered region spans residues 1–26; it reads MVTSSSSPPLATSQLPVMKGEEKPSN. The F-box domain maps to 24 to 71; the sequence is PSNWAELPPDLLSSILLRLSPLEILENARKVCRSWRRVSKDPLIWRRI. 5 LRR repeats span residues 108–133, 158–183, 185–210, 212–237, and 244–270; these read WRFQTTSLLNYMAERSSNLRRLRVKG, YCSIEEEHFKTIGQACPNLKTLKLVG, WSHLNESDNDALAIADTMPGLLHLQL, SNGLTNIGLNAILDGCPHLECLDLRQ, and FGDLERQCLERIKDFRCPNDVLDDYNY. A compositionally biased stretch (acidic residues) spans 279–289; that stretch reads IEDEKGEEEEN. A disordered region spans residues 279–307; it reads IEDEKGEEEENYSYGSDDTEYGYRRSADF.

The chain is Putative F-box/LRR-repeat protein 22 (FBL22) from Arabidopsis thaliana (Mouse-ear cress).